The sequence spans 407 residues: Arginine deiminase (407 aa).

The active-site Amidino-cysteine intermediate is the Cys-397.

The protein belongs to the arginine deiminase family.

Its subcellular location is the cytoplasm. The catalysed reaction is L-arginine + H2O = L-citrulline + NH4(+). The protein operates within amino-acid degradation; L-arginine degradation via ADI pathway; carbamoyl phosphate from L-arginine: step 1/2. This is Arginine deiminase from Listeria welshimeri serovar 6b (strain ATCC 35897 / DSM 20650 / CCUG 15529 / CIP 8149 / NCTC 11857 / SLCC 5334 / V8).